A 486-amino-acid polypeptide reads, in one-letter code: Elastin-binding protein EbpS (486 aa).

The segment covering 1–40 (MSNNFKDDFEKNRQSIDTNSHQDHTEDVEKDQSELEHQDT) has biased composition (basic and acidic residues). The tract at residues 1–314 (MSNNFKDDFE…NHDRDKERKK (314 aa)) is disordered. The Extracellular segment spans residues 2–204 (SNNFKDDFEK…ESKDHHSGKK (203 aa)). Positions 14–34 (QSIDTNSHQDHTEDVEKDQSE) are elastin-binding. Polar residues predominate over residues 64–85 (TNHNKQVHNESQTSEDNVQNEA). 3 stretches are compositionally biased toward basic and acidic residues: residues 103-118 (EPSH…EEYY), 126-160 (DKSH…KSEA), and 180-199 (SKDK…SKDH). Low complexity-rich tracts occupy residues 204 to 225 (KGAA…MGVS) and 233 to 246 (DAQN…SNNS). A helical transmembrane segment spans residues 205–225 (GAAIGAGTAGVAGAAGAMGVS). The Cytoplasmic portion of the chain corresponds to 226–319 (KAKKHSNDAQ…KERKKGGMAK (94 aa)). Residues 247-259 (TEDKVSQDKSKDH) are compositionally biased toward basic and acidic residues. The segment covering 278–297 (GAASKSASAASKPHASNNAS) has biased composition (low complexity). The segment covering 299–314 (NHDEHDNHDRDKERKK) has biased composition (basic and acidic residues). Residues 320–340 (VLLPLIAAVLIIGALAIFGGM) traverse the membrane as a helical segment. Residues 341 to 486 (ALNNHNNGTK…IRNGQQIVIP (146 aa)) are Extracellular-facing. A disordered region spans residues 351-440 (ENKIANTNKN…QRQGGGQRHT (90 aa)). The span at 361 to 398 (NADESKDKDTSKDASKDKSKSTDSDKSKEDQDKATKDE) shows a compositional bias: basic and acidic residues. Residues 403 to 431 (QNNANQANNQAQNNQNQQQANQNQQQQQQ) are compositionally biased toward low complexity. One can recognise a LysM domain in the interval 437-485 (QRHTVNGQENLYRIAIQYYGSGSPENVEKIRRANGLSGNNIRNGQQIVI).

The protein resides in the cell membrane. Functionally, promotes binding of soluble elastin peptides and tropoelastin to S.aureus cells although it is not able to promote bacterial adherence to immobilized elastin and, therefore, is not a microbial surface component recognizing adhesive matrix molecule (MSCRAMM). The protein is Elastin-binding protein EbpS (ebpS) of Staphylococcus aureus (strain MSSA476).